The sequence spans 107 residues: Ferredoxin CarAc (107 aa).

One can recognise a Rieske domain in the interval 6-102 (LKVCAASDMQ…VEVKEGEVYV (97 aa)). 4 residues coordinate [2Fe-2S] cluster: Cys46, His48, Cys65, and His68.

Monomer. Carbazole 1,9a-dioxygenase complex consists of a terminal oxygenase component CarAa, a ferredoxin reductase component CarAd and a ferredoxin component CarAc. The cofactor is [2Fe-2S] cluster.

Functionally, part of the multicomponent carbazole 1,9a-dioxygenase (CARDO), that converts carbazole (CAR) into 2-aminobiphenyl-2,3-diol. Acts as a mediator in the electron transfer from CarAd to CarAa. In Metapseudomonas resinovorans (Pseudomonas resinovorans), this protein is Ferredoxin CarAc (carAc).